Here is a 202-residue protein sequence, read N- to C-terminus: 3-isopropylmalate dehydratase small subunit (202 aa).

The protein belongs to the LeuD family. LeuD type 1 subfamily. Heterodimer of LeuC and LeuD.

It catalyses the reaction (2R,3S)-3-isopropylmalate = (2S)-2-isopropylmalate. It participates in amino-acid biosynthesis; L-leucine biosynthesis; L-leucine from 3-methyl-2-oxobutanoate: step 2/4. In terms of biological role, catalyzes the isomerization between 2-isopropylmalate and 3-isopropylmalate, via the formation of 2-isopropylmaleate. The chain is 3-isopropylmalate dehydratase small subunit from Novosphingobium aromaticivorans (strain ATCC 700278 / DSM 12444 / CCUG 56034 / CIP 105152 / NBRC 16084 / F199).